The sequence spans 123 residues: Large ribosomal subunit protein bL12 (123 aa).

This sequence belongs to the bacterial ribosomal protein bL12 family. Homodimer. Part of the ribosomal stalk of the 50S ribosomal subunit. Forms a multimeric L10(L12)X complex, where L10 forms an elongated spine to which 2 to 4 L12 dimers bind in a sequential fashion. Binds GTP-bound translation factors.

In terms of biological role, forms part of the ribosomal stalk which helps the ribosome interact with GTP-bound translation factors. Is thus essential for accurate translation. This is Large ribosomal subunit protein bL12 from Acholeplasma laidlawii (strain PG-8A).